The chain runs to 186 residues: uncharacterized protein (186 aa).

Residues 1–28 (MSVKPAALFRISAALAVAGLGASLIASA) form the signal peptide.

This is an uncharacterized protein from Rhizobium meliloti (strain 1021) (Ensifer meliloti).